Consider the following 554-residue polypeptide: Pigment biosynthesis transcriptional activator pigB (554 aa).

The tract at residues 1-21 (MFTSSSPEQRKPRQSRQLPGA) is disordered. Residues 23–40 (CEECRRKKLRCDRQQPQC) constitute a DNA-binding region (zn(2)-C6 fungal-type).

The protein resides in the nucleus. Functionally, transcription factor; part of the gene cluster that mediates the biosynthesis of azaphilone pigments (MonAzPs), a complex mixture of compounds with a common azaphilone skeleton very widely used as food colorants. Positively regulates the expression of the azaphilone pigments (MonAzPs) gene cluster. In Monascus ruber (Mold), this protein is Pigment biosynthesis transcriptional activator pigB.